Consider the following 243-residue polypeptide: Probable fructoselysine utilization operon transcriptional repressor (243 aa).

The HTH gntR-type domain maps to 10 to 78 (QLLYATVRQR…QGKGTFVQSQ (69 aa)). The H-T-H motif DNA-binding region spans 38–57 (ENELCTQYNVSRITIRKAIS).

It functions in the pathway carbohydrate metabolism; fructoselysine degradation [regulation]. Its function is as follows. May regulate the transcription of the frlABCDR operon, involved in the utilization of fructoselysine and psicoselysine. The protein is Probable fructoselysine utilization operon transcriptional repressor (frlR) of Escherichia coli O157:H7.